A 237-amino-acid polypeptide reads, in one-letter code: Orotidine 5'-phosphate decarboxylase (237 aa).

Residues D11, K34, 61 to 70, T123, R185, Q194, G214, and R215 contribute to the substrate site; that span reads DLKLHDIPNT. The active-site Proton donor is the K63.

The protein belongs to the OMP decarboxylase family. Type 1 subfamily. Homodimer.

It catalyses the reaction orotidine 5'-phosphate + H(+) = UMP + CO2. It participates in pyrimidine metabolism; UMP biosynthesis via de novo pathway; UMP from orotate: step 2/2. In terms of biological role, catalyzes the decarboxylation of orotidine 5'-monophosphate (OMP) to uridine 5'-monophosphate (UMP). This chain is Orotidine 5'-phosphate decarboxylase, found in Ligilactobacillus salivarius (strain UCC118) (Lactobacillus salivarius).